Reading from the N-terminus, the 561-residue chain is DNA ligase B (561 aa).

The N6-AMP-lysine intermediate role is filled by K125.

This sequence belongs to the NAD-dependent DNA ligase family. LigB subfamily.

It carries out the reaction NAD(+) + (deoxyribonucleotide)n-3'-hydroxyl + 5'-phospho-(deoxyribonucleotide)m = (deoxyribonucleotide)n+m + AMP + beta-nicotinamide D-nucleotide.. Its function is as follows. Catalyzes the formation of phosphodiester linkages between 5'-phosphoryl and 3'-hydroxyl groups in double-stranded DNA using NAD as a coenzyme and as the energy source for the reaction. This Salmonella heidelberg (strain SL476) protein is DNA ligase B.